We begin with the raw amino-acid sequence, 269 residues long: Eukaryotic translation initiation factor 3 subunit G-1 (269 aa).

Positions 188–266 (AAIRISNLSE…LILSVEWSKP (79 aa)) constitute an RRM domain.

The protein belongs to the eIF-3 subunit G family. In terms of assembly, component of the eukaryotic translation initiation factor 3 (eIF-3) complex. The eIF-3 complex interacts with pix.

It localises to the cytoplasm. Its function is as follows. RNA-binding component of the eukaryotic translation initiation factor 3 (eIF-3) complex, which is involved in protein synthesis of a specialized repertoire of mRNAs and, together with other initiation factors, stimulates binding of mRNA and methionyl-tRNAi to the 40S ribosome. The eIF-3 complex specifically targets and initiates translation of a subset of mRNAs involved in cell proliferation. This subunit can bind 18S rRNA. The chain is Eukaryotic translation initiation factor 3 subunit G-1 from Drosophila sechellia (Fruit fly).